Consider the following 742-residue polypeptide: Two-component response regulator-like PRR37 (742 aa).

Residues 63–181 (KVLLVDSDDS…ELKNLWQHVW (119 aa)) form the Response regulatory domain. A compositionally biased stretch (low complexity) spans 186–195 (SSSGSGSESG). Disordered stretches follow at residues 186 to 249 (SSSG…SWTK), 290 to 346 (PCTS…PLQN), 377 to 402 (QQAARAANAPNCSSKVPEGKDKNRDN), 478 to 517 (MKSNSDAAPIKQGSNGSSNNNDMGSTTKNVVTKPSTNKER), 533 to 568 (FHPAQHWTSPANTTGKEKTDEVANNAAKRAQPGEVQ), 590 to 671 (NGGS…GNDM), and 697 to 742 (NFGK…AADR). Residues 236–248 (DNGSGTQAQSSWT) show a composition bias toward polar residues. A compositionally biased stretch (basic and acidic residues) spans 299 to 313 (KQKETNDDFKGKDLE). The span at 318–330 (RNLNTAYQSSPNE) shows a compositional bias: polar residues. The segment covering 331 to 341 (RSIKPTDRRNE) has biased composition (basic and acidic residues). Low complexity predominate over residues 490-502 (GSNGSSNNNDMGS). Residues 503–512 (TTKNVVTKPS) are compositionally biased toward polar residues. Over residues 618–634 (NGSNSGSNNGSNGQNGS) the composition is skewed to low complexity. Over residues 656 to 667 (GPGGGNGSGSGS) the composition is skewed to gly residues. In terms of domain architecture, CCT spans 682–724 (RVAAVIKFRQKRKERNFGKKVRYQSRKRLAEQRPRVRGQFVRQ). Over residues 697 to 708 (NFGKKVRYQSRK) the composition is skewed to basic residues. Low complexity predominate over residues 719–731 (GQFVRQAVQDQQQ).

The protein belongs to the ARR-like family.

The protein localises to the nucleus. Functionally, probable transcription factor involved in the regulation of flowering time under long day (LD) conditions. Functions as a repressor of flowering. Controls flowering time by negatively regulating the expression of HD3A. Acts downstream of the phytochrome B to repress the expression of EHD1, an activator of the flowering promoter genes HD3A and RFT1. Controls photoperiodic flowering response. Seems to be one of the component of the circadian clock. Expression of several members of the ARR-like family is controlled by circadian rhythm. The particular coordinated sequential expression of PRR73, PRR37, PRR95, PRR59 and PPR1 result to circadian waves that may be at the basis of the endogenous circadian clock. This chain is Two-component response regulator-like PRR37, found in Oryza sativa subsp. japonica (Rice).